The chain runs to 730 residues: Ribosomal RNA large subunit methyltransferase K/L (730 aa).

A THUMP domain is found at 46 to 157 (TAYRLCLWSR…RGEAILSLDL (112 aa)).

This sequence belongs to the methyltransferase superfamily. RlmKL family.

The protein resides in the cytoplasm. It catalyses the reaction guanosine(2445) in 23S rRNA + S-adenosyl-L-methionine = N(2)-methylguanosine(2445) in 23S rRNA + S-adenosyl-L-homocysteine + H(+). It carries out the reaction guanosine(2069) in 23S rRNA + S-adenosyl-L-methionine = N(2)-methylguanosine(2069) in 23S rRNA + S-adenosyl-L-homocysteine + H(+). In terms of biological role, specifically methylates the guanine in position 2445 (m2G2445) and the guanine in position 2069 (m7G2069) of 23S rRNA. The chain is Ribosomal RNA large subunit methyltransferase K/L from Pseudomonas putida (strain W619).